Consider the following 59-residue polypeptide: MNVQERFDKTIKDCKRVLKVSRKPDKQEYLEFSKIVAIGIAIIGVVGFIIVLIGELIGL.

A helical membrane pass occupies residues 35–55; sequence IVAIGIAIIGVVGFIIVLIGE.

Belongs to the SecE/SEC61-gamma family. Component of the Sec protein translocase complex. Heterotrimer consisting of SecY (alpha), SecG (beta) and SecE (gamma) subunits. The heterotrimers can form oligomers, although 1 heterotrimer is thought to be able to translocate proteins. Interacts with the ribosome. May interact with SecDF, and other proteins may be involved.

Its subcellular location is the cell membrane. Its function is as follows. Essential subunit of the Sec protein translocation channel SecYEG. Clamps together the 2 halves of SecY. May contact the channel plug during translocation. In Methanobrevibacter smithii (strain ATCC 35061 / DSM 861 / OCM 144 / PS), this protein is Protein translocase subunit SecE.